The following is a 460-amino-acid chain: Bifunctional protein GlmU (460 aa).

Positions 1–229 are pyrophosphorylase; that stretch reads MSNYAIILAA…FEESLGVNDR (229 aa). UDP-N-acetyl-alpha-D-glucosamine is bound by residues 8-11, Lys-22, Gln-72, and 77-78; these read LAAG and GT. Asp-102 provides a ligand contact to Mg(2+). 4 residues coordinate UDP-N-acetyl-alpha-D-glucosamine: Gly-139, Glu-154, Asn-169, and Asn-227. Asn-227 serves as a coordination point for Mg(2+). A linker region spans residues 230-250; it reads VALATAEDVMRRRINKTHMIN. Residues 251-460 are N-acetyltransferase; sequence GVTFQNPNAT…KKPHHPSQQK (210 aa). The UDP-N-acetyl-alpha-D-glucosamine site is built by Arg-332 and Lys-350. The Proton acceptor role is filled by His-362. Residues Tyr-365 and Asn-376 each coordinate UDP-N-acetyl-alpha-D-glucosamine. Residues Ala-379, 385 to 386, Ser-404, Ala-422, and Arg-439 each bind acetyl-CoA; that span reads NY.

In the N-terminal section; belongs to the N-acetylglucosamine-1-phosphate uridyltransferase family. It in the C-terminal section; belongs to the transferase hexapeptide repeat family. As to quaternary structure, homotrimer. It depends on Mg(2+) as a cofactor.

Its subcellular location is the cytoplasm. The enzyme catalyses alpha-D-glucosamine 1-phosphate + acetyl-CoA = N-acetyl-alpha-D-glucosamine 1-phosphate + CoA + H(+). It carries out the reaction N-acetyl-alpha-D-glucosamine 1-phosphate + UTP + H(+) = UDP-N-acetyl-alpha-D-glucosamine + diphosphate. The protein operates within nucleotide-sugar biosynthesis; UDP-N-acetyl-alpha-D-glucosamine biosynthesis; N-acetyl-alpha-D-glucosamine 1-phosphate from alpha-D-glucosamine 6-phosphate (route II): step 2/2. It participates in nucleotide-sugar biosynthesis; UDP-N-acetyl-alpha-D-glucosamine biosynthesis; UDP-N-acetyl-alpha-D-glucosamine from N-acetyl-alpha-D-glucosamine 1-phosphate: step 1/1. It functions in the pathway bacterial outer membrane biogenesis; LPS lipid A biosynthesis. Catalyzes the last two sequential reactions in the de novo biosynthetic pathway for UDP-N-acetylglucosamine (UDP-GlcNAc). The C-terminal domain catalyzes the transfer of acetyl group from acetyl coenzyme A to glucosamine-1-phosphate (GlcN-1-P) to produce N-acetylglucosamine-1-phosphate (GlcNAc-1-P), which is converted into UDP-GlcNAc by the transfer of uridine 5-monophosphate (from uridine 5-triphosphate), a reaction catalyzed by the N-terminal domain. This Streptococcus thermophilus (strain ATCC BAA-491 / LMD-9) protein is Bifunctional protein GlmU.